A 337-amino-acid polypeptide reads, in one-letter code: Fructose-1,6-bisphosphatase class 1 (337 aa).

Mg(2+) contacts are provided by glutamate 89, aspartate 112, leucine 114, and aspartate 115. Residues 115 to 118 (DGSS), asparagine 208, tyrosine 241, and lysine 271 each bind substrate. A Mg(2+)-binding site is contributed by glutamate 277.

Belongs to the FBPase class 1 family. As to quaternary structure, homotetramer. It depends on Mg(2+) as a cofactor.

The protein resides in the cytoplasm. The catalysed reaction is beta-D-fructose 1,6-bisphosphate + H2O = beta-D-fructose 6-phosphate + phosphate. Its pathway is carbohydrate biosynthesis; gluconeogenesis. This Yersinia pseudotuberculosis serotype O:1b (strain IP 31758) protein is Fructose-1,6-bisphosphatase class 1.